A 192-amino-acid chain; its full sequence is uncharacterized protein (192 aa).

Residues 29–160 form the Nudix hydrolase domain; that stretch reads HRQAAVLIPI…PLDIYRRGDS (132 aa). The Nudix box signature appears at 67-89; that stretch reads GAVDDTDTSVIAAALREAEEEVA. Positions 83 and 87 each coordinate Mg(2+).

Belongs to the Nudix hydrolase family. PCD1 subfamily. The cofactor is Mn(2+). Mg(2+) serves as cofactor.

In terms of biological role, probably mediates the hydrolysis of some nucleoside diphosphate derivatives. This is an uncharacterized protein from Escherichia coli O6:H1 (strain CFT073 / ATCC 700928 / UPEC).